Reading from the N-terminus, the 966-residue chain is Catenin alpha-2 (966 aa).

Residues 924–940 (PEKKPLVKREKPEEYQT) are compositionally biased toward basic and acidic residues. The disordered stretch occupies residues 924–952 (PEKKPLVKREKPEEYQTRVRRGSQKKHIS). The segment covering 941 to 951 (RVRRGSQKKHI) has biased composition (basic residues).

The protein belongs to the vinculin/alpha-catenin family.

Its subcellular location is the cell membrane. It is found in the cytoplasm. The protein localises to the cytoskeleton. It localises to the cell junction. The protein resides in the adherens junction. Its subcellular location is the cell projection. It is found in the axon. The protein localises to the nucleus. May function as a linker between cadherin adhesion receptors and the cytoskeleton to regulate cell-cell adhesion and differentiation in the nervous system. This is Catenin alpha-2 (ctnna2) from Xenopus laevis (African clawed frog).